The following is a 235-amino-acid chain: Phosphoribosylaminoimidazole-succinocarboxamide synthase (235 aa).

This sequence belongs to the SAICAR synthetase family.

It catalyses the reaction 5-amino-1-(5-phospho-D-ribosyl)imidazole-4-carboxylate + L-aspartate + ATP = (2S)-2-[5-amino-1-(5-phospho-beta-D-ribosyl)imidazole-4-carboxamido]succinate + ADP + phosphate + 2 H(+). Its pathway is purine metabolism; IMP biosynthesis via de novo pathway; 5-amino-1-(5-phospho-D-ribosyl)imidazole-4-carboxamide from 5-amino-1-(5-phospho-D-ribosyl)imidazole-4-carboxylate: step 1/2. The chain is Phosphoribosylaminoimidazole-succinocarboxamide synthase from Streptococcus agalactiae serotype Ia (strain ATCC 27591 / A909 / CDC SS700).